The chain runs to 416 residues: Serine hydroxymethyltransferase (416 aa).

(6S)-5,6,7,8-tetrahydrofolate contacts are provided by residues leucine 118 and 122–124; that span reads GHL. Residue lysine 226 is modified to N6-(pyridoxal phosphate)lysine. Residues glutamate 242 and 350–352 contribute to the (6S)-5,6,7,8-tetrahydrofolate site; that span reads SPF.

The protein belongs to the SHMT family. In terms of assembly, homodimer. The cofactor is pyridoxal 5'-phosphate.

The protein localises to the cytoplasm. It catalyses the reaction (6R)-5,10-methylene-5,6,7,8-tetrahydrofolate + glycine + H2O = (6S)-5,6,7,8-tetrahydrofolate + L-serine. It functions in the pathway one-carbon metabolism; tetrahydrofolate interconversion. It participates in amino-acid biosynthesis; glycine biosynthesis; glycine from L-serine: step 1/1. Catalyzes the reversible interconversion of serine and glycine with tetrahydrofolate (THF) serving as the one-carbon carrier. This reaction serves as the major source of one-carbon groups required for the biosynthesis of purines, thymidylate, methionine, and other important biomolecules. Also exhibits THF-independent aldolase activity toward beta-hydroxyamino acids, producing glycine and aldehydes, via a retro-aldol mechanism. This Helicobacter acinonychis (strain Sheeba) protein is Serine hydroxymethyltransferase.